Consider the following 532-residue polypeptide: FAD-dependent monooxygenase hkm7 (532 aa).

Residues 191–193 and Asp-261 contribute to the FAD site; that span reads RIY.

It belongs to the PheA/TfdB FAD monooxygenase family.

The protein operates within secondary metabolite biosynthesis. Functionally, FAD-dependent monooxygenase; part of the gene cluster that mediates the biosynthesis of hancockiamides, an unusual new family of N-cinnamoylated piperazines. The NRPS hkm10 and the NmrA-like reductase hkm9 are proposed to convert two molecules of L-Phe to the intermediary piperazine called xenocockiamide A. Xenocockiamide A is then converted to hancockiamide D via a series of hydroxylations and O-methylations. The tyrosinase hkm6 may catalyze an aromatic hydroxylation, then the 2-oxoglutarate-dependent Fe(II) dioxygenase hkm4 and the FAD-dependent phenol hydroxylase hkm7 may catalyze consecutive hydroxylations to install 2 more hydroxy groups, and the methyltransferase hkm8 probably catalyzes two methylations using 2 molecules of S-adenosyl-L-methionine (SAM). The NRPS hkm11 activates and transfers trans-cinnamate supplied by the PAL hkm12 to hancockiamide D and produces hancockiamide A. NRPS Hkm11 has the flexibility to tolerate the bulky hancockiamide G as a substrate and the absence of the acetyl-transferase hkm3 opens up the opportunity for hkm11 to introduce a second N-cinnamoyl moiety. The cytochrome P450 monooxygenase hkm5 catalyzes the methylenedioxy bridge formation, converting hancockiamide A into hancockiamide G. Hkm5 can also convert hancockiamide B into hancockiamide C, and hancockiamide D into hancockiamide H. The N-acetyltransferase hkm3 finally transfers an acetyl group to 1-N of piperazine, converting hancockiamide A into hancockiamide B and hancockiamide G into hancockiamide C. This chain is FAD-dependent monooxygenase hkm7, found in Aspergillus hancockii.